Reading from the N-terminus, the 270-residue chain is MRGQGRKESLSESRDLDGSYDQLTGHPPGPSKKALKQRFLKLLPCCGPQALPSVSETLAAPASLRPHRPRPLDPDSVEDEFELSTVCHRPEGLEQLQEQTKFTRRELQVLYRGFKNECPSGIVNEENFKQIYSQFFPQGDSSNYATFLFNAFDTNHDGSVSFEDFVAGLSVILRGTIDDRLSWAFNLYDLNKDGCITKEEMLDIMKSIYDMMGKYTYPALREEAPREHVESFFQKMDRNKDGVVTIEEFIESCQQDENIMRSMQLFDNVI.

Residues 1–17 (MRGQGRKESLSESRDLD) show a composition bias toward basic and acidic residues. Positions 1–34 (MRGQGRKESLSESRDLDGSYDQLTGHPPGPSKKA) are disordered. Ser9 carries the post-translational modification Phosphoserine. S-palmitoyl cysteine attachment occurs at residues Cys45 and Cys46. One can recognise an EF-hand 1; degenerate domain in the interval 81–137 (FELSTVCHRPEGLEQLQEQTKFTRRELQVLYRGFKNECPSGIVNEENFKQIYSQFFP). 3 consecutive EF-hand domains span residues 140–175 (DSSN…ILRG), 176–211 (TIDD…IYDM), and 224–259 (APRE…DENI). Asp153, Asn155, Asp157, Ser159, Asp164, Asp189, Asn191, Asp193, Cys195, Glu200, Asp237, Asn239, Asp241, and Glu248 together coordinate Ca(2+). Residues 257–270 (ENIMRSMQLFDNVI) are interaction with KCND2.

The protein belongs to the recoverin family. Component of heteromultimeric potassium channels. Identified in potassium channel complexes containing KCND1, KCND2, KCND3, KCNIP1, KCNIP2, KCNIP3, KCNIP4, DPP6 and DPP10. The KCND2-KCNIP2 channel complex contains four KCND2 and four KCNIP2 subunits. Interacts with KCND2. Probably part of a complex consisting of KCNIP1, KCNIP2 isoform 3 and KCND2. At least isoform 2 and isoform 3 can self-associate to form homodimers and homotetramers. Isoform 3 interacts with KCNIP1 in a calcium-dependent manner. Interacts with KCND3; each KCNIP2 monomer interacts with two adjacent KCND3 subunits, through both the N-terminal inactivation ball of a KCND3 subunit and a C-terminal helix from the adjacent KCND3 subunit, clamping them together; this interaction modulates the channel gating kinetics. Post-translationally, palmitoylated. Palmitoylation enhances association with the plasma membrane. Expressed in heart, brain and lung. In brain, abundantly expressed in striatum, hippocampus and olfactory bulb, moderately expressed in cerebral cortex and lowly expressed in thalamus and hypothalamus. Isoform 1 is predominant in cerebral cortex, striatum and hippocampus. Isoform 1, isoform 2 and isoform 3 are equally expressed in olfactory bulb. Iisoform 3 is expressed at high levels and isoform 1 at low levels in heart (in PubMed:11263977).

It localises to the cell membrane. Its function is as follows. Regulatory subunit of Kv4/D (Shal)-type voltage-gated rapidly inactivating A-type potassium channels. Modulates channel density, inactivation kinetics and rate of recovery from inactivation in a calcium-dependent and isoform-specific manner. Involved in KCND2 and KCND3 trafficking to the cell surface. Essential for the expression of I(To) currents in the heart. Required for normal protein levels of KCND2 in the heart ventricle. The sequence is that of A-type potassium channel modulatory protein KCNIP2 from Rattus norvegicus (Rat).